A 650-amino-acid polypeptide reads, in one-letter code: Secretin OutD (650 aa).

The N-terminal stretch at 1–18 is a signal peptide; it reads MLLLSGSVLLMASSLAWS. The interval 20-115 is N0; it reads EFSASFKGTD…LATDRQPGIG (96 aa). The interval 117–181 is N1; it reads EVVTRVVPVN…TIVERVDQTG (65 aa). Residues 182-255 form an N2 region; it reads DRNVTTIPLS…MVKQLDRQQA (74 aa). The segment at 258–330 is N3; that stretch reads GNTKVIYLKY…DLEQVIAQLD (73 aa). The interval 335–585 is secretin; that stretch reads QVLVEAIIAE…LFIRPSIIRD (251 aa). The s domain stretch occupies residues 587-650; that stretch reads SQFQSASASK…IVAFYPAGGK (64 aa).

It belongs to the bacterial secretin family. GSP D subfamily. In terms of assembly, forms a cylindrical channel with 15 subunits.

The protein localises to the cell outer membrane. Functionally, involved in a type II secretion system (T2SS, formerly general secretion pathway, GSP) for the export of proteins. Required for the translocation of the multiple pectic enzymes. This subunit forms the outer membrane channel. The chain is Secretin OutD (outD) from Pectobacterium carotovorum subsp. carotovorum (Erwinia carotovora subsp. carotovora).